The following is a 150-amino-acid chain: Galectin-2 (150 aa).

One can recognise a Galectin domain in the interval 9–141 (NQVKLQNDFK…FSSPVTVDVH (133 aa)). The a carbohydrate site is built by histidine 51, arginine 55, asparagine 64, glutamate 75, and arginine 77.

In terms of assembly, homotetramer. Oligomerization is required for carbohydrate binding.

It localises to the secreted. Its subcellular location is the extracellular space. It is found in the extracellular matrix. The protein localises to the cell wall. The protein resides in the endomembrane system. Binds lactose. May play a role in fruiting body formation. Displays toxicity towards the nematode C.elegans by binding to a specific Gal-beta-1,4-Fuc-alpha-1,6 modification of N-glycan cores on C.elegans intestinal cells. This chain is Galectin-2 (Cgl2), found in Coprinopsis cinerea (Inky cap fungus).